Here is a 227-residue protein sequence, read N- to C-terminus: MENLKKMAGIKAAEFVSDGMVVGLGTGSTAYYFVEEIGRRIKEEGLQITAVTTSSVTTKQAEGLNIPLKSIDQVDFVDVTVDGADEVDSQFNGIKGGGGALLMEKVVATPSKEYIWVVDESKLVEKLGAFKLPVEVVQYGAEQVFRHFERAGYKPSFREKDGQRFVTDMQNFIIDLALDVIENPIAFGQELDHVVGVVEHGLFNQMVDKVIVAGRDGVQISTSKKGK.

Residues 26-29 (TGST), 82-85 (DGAD), and 95-98 (KGGG) contribute to the substrate site. The active-site Proton acceptor is the glutamate 104. A substrate-binding site is contributed by lysine 122.

Belongs to the ribose 5-phosphate isomerase family. In terms of assembly, homodimer.

It catalyses the reaction aldehydo-D-ribose 5-phosphate = D-ribulose 5-phosphate. Its pathway is carbohydrate degradation; pentose phosphate pathway; D-ribose 5-phosphate from D-ribulose 5-phosphate (non-oxidative stage): step 1/1. Functionally, catalyzes the reversible conversion of ribose-5-phosphate to ribulose 5-phosphate. This is Ribose-5-phosphate isomerase A from Streptococcus pneumoniae serotype 2 (strain D39 / NCTC 7466).